Here is a 299-residue protein sequence, read N- to C-terminus: Protoheme IX farnesyltransferase (299 aa).

Transmembrane regions (helical) follow at residues 25 to 45, 47 to 67, 95 to 115, 119 to 139, 147 to 167, 173 to 193, 218 to 238, 243 to 263, and 277 to 297; these read VVLLMLITSLVGMFLATRAGV, WTVLLFGNLGIALCAGGAAAV, AAALTFAFVLGVSGLALLLTF, LAAWLTLASLIGYAVIYTGFL, IVIGGLAGAAPPLLGWVAVTG, PLLLVLIIFAWTPPHFWALAI, VHILLYTAMLLAVSFMPFAIH, LYLAAAVLLGARFLYWTIALY, and FSIWYLFALFIALLVDHYLLL.

Belongs to the UbiA prenyltransferase family. Protoheme IX farnesyltransferase subfamily.

It localises to the cell inner membrane. The enzyme catalyses heme b + (2E,6E)-farnesyl diphosphate + H2O = Fe(II)-heme o + diphosphate. It participates in porphyrin-containing compound metabolism; heme O biosynthesis; heme O from protoheme: step 1/1. In terms of biological role, converts heme B (protoheme IX) to heme O by substitution of the vinyl group on carbon 2 of heme B porphyrin ring with a hydroxyethyl farnesyl side group. In Stutzerimonas stutzeri (strain A1501) (Pseudomonas stutzeri), this protein is Protoheme IX farnesyltransferase.